Here is a 423-residue protein sequence, read N- to C-terminus: UDP-N-acetylglucosamine 1-carboxyvinyltransferase (423 aa).

21–22 (KN) contributes to the phosphoenolpyruvate binding site. Arg92 lines the UDP-N-acetyl-alpha-D-glucosamine pocket. Cys116 functions as the Proton donor in the catalytic mechanism. Cys116 carries the post-translational modification 2-(S-cysteinyl)pyruvic acid O-phosphothioketal. Residues Asp305 and Val327 each coordinate UDP-N-acetyl-alpha-D-glucosamine.

This sequence belongs to the EPSP synthase family. MurA subfamily.

It localises to the cytoplasm. It carries out the reaction phosphoenolpyruvate + UDP-N-acetyl-alpha-D-glucosamine = UDP-N-acetyl-3-O-(1-carboxyvinyl)-alpha-D-glucosamine + phosphate. It functions in the pathway cell wall biogenesis; peptidoglycan biosynthesis. Cell wall formation. Adds enolpyruvyl to UDP-N-acetylglucosamine. This chain is UDP-N-acetylglucosamine 1-carboxyvinyltransferase, found in Fervidobacterium nodosum (strain ATCC 35602 / DSM 5306 / Rt17-B1).